We begin with the raw amino-acid sequence, 456 residues long: Alcohol acyltransferase 1 (456 aa).

Catalysis depends on proton acceptor residues H166 and D382.

This sequence belongs to the plant acyltransferase family.

Functionally, involved in the biosynthesis of volatile esters which confer kiwifruit flavor. Alcohol acyl transferase that can use a wide range of alcohols as substrate to produce esters. In Actinidia chinensis var. chinensis (Chinese soft-hair kiwi), this protein is Alcohol acyltransferase 1.